We begin with the raw amino-acid sequence, 185 residues long: Elongation factor P (185 aa).

This sequence belongs to the elongation factor P family.

The protein localises to the cytoplasm. It functions in the pathway protein biosynthesis; polypeptide chain elongation. Involved in peptide bond synthesis. Stimulates efficient translation and peptide-bond synthesis on native or reconstituted 70S ribosomes in vitro. Probably functions indirectly by altering the affinity of the ribosome for aminoacyl-tRNA, thus increasing their reactivity as acceptors for peptidyl transferase. The polypeptide is Elongation factor P (Endomicrobium trichonymphae).